A 325-amino-acid polypeptide reads, in one-letter code: Tagatose 1,6-diphosphate aldolase 1 (325 aa).

The protein belongs to the aldolase LacD family.

The enzyme catalyses D-tagatofuranose 1,6-bisphosphate = D-glyceraldehyde 3-phosphate + dihydroxyacetone phosphate. Its pathway is carbohydrate metabolism; D-tagatose 6-phosphate degradation; D-glyceraldehyde 3-phosphate and glycerone phosphate from D-tagatose 6-phosphate: step 2/2. In Streptococcus pyogenes serotype M3 (strain ATCC BAA-595 / MGAS315), this protein is Tagatose 1,6-diphosphate aldolase 1 (lacD1).